A 200-amino-acid chain; its full sequence is MTIEFNATKREGQGSSASRRLRRAAQVPGIIYGAGKDAQPITLDHNELYHLLKKEAFHASVLSINVEGAKETVVLRDTQWHAYKQQVLHIDFQRVDASQKLHLKVPLHFVNGDNAPAVKLGGNIIAHVMTELDVQCLPSSLPEFIEVDLAALEAGQSIHVSQLKLPAGVEAVHHGEGDPVVASAQTTRGAAAAEGEGEAA.

Disordered stretches follow at residues 1 to 20 (MTIE…ASRR) and 179 to 200 (PVVA…GEAA).

The protein belongs to the bacterial ribosomal protein bL25 family. CTC subfamily. In terms of assembly, part of the 50S ribosomal subunit; part of the 5S rRNA/L5/L18/L25 subcomplex. Contacts the 5S rRNA. Binds to the 5S rRNA independently of L5 and L18.

This is one of the proteins that binds to the 5S RNA in the ribosome where it forms part of the central protuberance. The sequence is that of Large ribosomal subunit protein bL25 from Azoarcus sp. (strain BH72).